The primary structure comprises 833 residues: MSFYNHKEIEPKWQGYWAEHHTFKTGTDASKPKFYALDMFPYPSGAGLHVGHPEGYTATDILSRYKRAQGYNVLHPMGWDAFGLPAEQYAMDTGNDPAEFTSENIANFKRQINALGFSYDWDREVNTTDPNYYKWTQWIFTKLYEKGLAYEAEVPVNWVEELGTAIANEEVLPDGTSERGGYPVVRKPMRQWMLKITAYAERLLNDLDELDWSESIKDMQRNWIGKSTGANVTFKVKGTDKEFTVFTTRPDTLFGATFTVLAPEHELVDAITSSEQAEAVVDYKHQASLKSDLARTDLAKEKTGVWTGAYAINPVNGKEMPIWIADYVLASYGTGAVMAVPAHDQRDWEFAKQFDLPIVEVLEGGNVEEAAYTEDGLHVNSDFLDGLNKEDAIAKIVACLEEKGCGQEKVTYRLRDWLFSRQRYWGEPIPIIHWEDGTSTAVPETELPLVLPVTKDIRPSGTGESPLANLTDWLEVTREDGVKGRRETNTMPQWAGSSWYYLRYIDPHNTEKLADEDLLKQWLPVDIYVGGAEHAVLHLLYARFWHKFLYDLGVVPTKEPFQKLFNQGMILGTSYRDHRGALVATDKVEKRDGSFFHIETGEELEQAPAKMSKSLKNVVNPDDVVEQYGADTLRVYEMFMGPLDASIAWSEEGLEGSRKFLDRVYRLITSKEILAENNGALDKAYNETVKAVTEQIESLKFNTAIAQLMVFVNAANKEDKLYVDYAKGFIQLIAPFAPHLAEELWQTVAETDKSISYVAWPTWDESKLVEDEIEIVVQIKGKVRAKLMVAKDLSREELQEIALADEKVKAEIDGKEIVKVIAVPNKLVNIVVK.

The short motif at 41–52 (PYPSGAGLHVGH) is the 'HIGH' region element. Residues 610-614 (KMSKS) carry the 'KMSKS' region motif. Lys613 contributes to the ATP binding site.

It belongs to the class-I aminoacyl-tRNA synthetase family.

It localises to the cytoplasm. The catalysed reaction is tRNA(Leu) + L-leucine + ATP = L-leucyl-tRNA(Leu) + AMP + diphosphate. The sequence is that of Leucine--tRNA ligase from Streptococcus pneumoniae (strain CGSP14).